The following is a 1284-amino-acid chain: ABC multidrug transporter atrC (1284 aa).

Residues 1–11 (MKSTAESKETP) show a composition bias toward basic and acidic residues. The disordered stretch occupies residues 1 to 24 (MKSTAESKETPSQDESTTSVPCTE). A run of 6 helical transmembrane segments spans residues 55 to 75 (AVAILAACASGAGIALQNLIF), 99 to 119 (AAELALYFVYLGIARLVLSYT), 178 to 198 (IGLLFQGLAAFVTAFIIAFVV), 203 to 223 (TLICICIPVATIGTTGVVAAV), 282 to 302 (LLGLLFSAEYTIIYLGYGLAF), and 320 to 340 (IFTVLLSVVIASINLTLLAPY). The 292-residue stretch at 55–346 (AVAILAACAS…LAPYSIEFSR (292 aa)) folds into the ABC transmembrane type-1 1 domain. The 246-residue stretch at 381-626 (VELENVTFSY…DGVYAGLVKI (246 aa)) folds into the ABC transporter 1 domain. Residues N385 and N401 are each glycosylated (N-linked (GlcNAc...) asparagine). Residue 416-423 (GQSGSGKS) participates in ATP binding. N-linked (GlcNAc...) asparagine glycans are attached at residues N488 and N632. The next 2 helical transmembrane spans lie at 705 to 725 (LVVLLGCLGGCAMYPGQAILM) and 745 to 765 (FYASMLIVLAAGCLICYLAVG). The ABC transmembrane type-1 2 domain occupies 705-992 (LVVLLGCLGG…LFQWSTSITK (288 aa)). N800 carries N-linked (GlcNAc...) asparagine glycosylation. 4 consecutive transmembrane segments (helical) span residues 824–844 (IALVVIAVLQVVTCGILAIAF), 846–866 (WKLGLVVVFGGIPPLVGAGMV), 931–951 (MICFGLTQCIEYWFQALGFWY), and 955–975 (LVSLGETSMYSFFVAFLSVFF). N995 carries an N-linked (GlcNAc...) asparagine glycan. An ABC transporter 2 domain is found at 1027-1280 (IAMDNVRFSY…GGLYRRMCEA (254 aa)). 1062 to 1069 (GSSGCGKS) lines the ATP pocket. N1122 is a glycosylation site (N-linked (GlcNAc...) asparagine).

It belongs to the ABC transporter superfamily. ABCB family. Multidrug resistance exporter (TC 3.A.1.201) subfamily.

The protein resides in the cell membrane. Functionally, pleiotropic ABC efflux transporter involved in the protection of the cells against a wide range of toxic compounds. This chain is ABC multidrug transporter atrC, found in Emericella nidulans (strain FGSC A4 / ATCC 38163 / CBS 112.46 / NRRL 194 / M139) (Aspergillus nidulans).